We begin with the raw amino-acid sequence, 131 residues long: Small ribosomal subunit protein uS8 (131 aa).

It belongs to the universal ribosomal protein uS8 family. In terms of assembly, part of the 30S ribosomal subunit. Contacts proteins S5 and S12.

Functionally, one of the primary rRNA binding proteins, it binds directly to 16S rRNA central domain where it helps coordinate assembly of the platform of the 30S subunit. This Burkholderia multivorans (strain ATCC 17616 / 249) protein is Small ribosomal subunit protein uS8.